The sequence spans 91 residues: MTEQENKTSLIEFPCTFPLKVMGAVHPEFEQAVLETVRLHAPDTQAHHITTRPSSKGNYTGATVQVKVENQEQLDNIYRALTSHELVKVVL.

This sequence belongs to the UPF0250 family.

The polypeptide is UPF0250 protein NGO_0791 (Neisseria gonorrhoeae (strain ATCC 700825 / FA 1090)).